Consider the following 176-residue polypeptide: Ribosome maturation factor RimM (176 aa).

The PRC barrel domain maps to 97 to 176; that stretch reads EDEFYWRDLI…QILVDWDPDF (80 aa).

Belongs to the RimM family. Binds ribosomal protein uS19.

It localises to the cytoplasm. Its function is as follows. An accessory protein needed during the final step in the assembly of 30S ribosomal subunit, possibly for assembly of the head region. Essential for efficient processing of 16S rRNA. May be needed both before and after RbfA during the maturation of 16S rRNA. It has affinity for free ribosomal 30S subunits but not for 70S ribosomes. This Shewanella sp. (strain ANA-3) protein is Ribosome maturation factor RimM.